We begin with the raw amino-acid sequence, 1018 residues long: D-2-hydroxyglutarate dehydrogenase (1018 aa).

Positions 48–281 (YQLLPDAVVF…TEARLDITRL (234 aa)) constitute an FAD-binding PCMH-type domain. (R)-2-hydroxyglutarate contacts are provided by arginine 402 and histidine 500. One can recognise a 4Fe-4S ferredoxin-type domain in the interval 662–695 (FSHEVKEAMSGCLACKACSTQCPIKIDVPEFRSR). Residues cysteine 673, cysteine 676, cysteine 679, and cysteine 683 each coordinate [4Fe-4S] cluster.

It in the N-terminal section; belongs to the FAD-binding oxidoreductase/transferase type 4 family. In terms of assembly, homotetramer. Requires [4Fe-4S] cluster as cofactor. FAD is required as a cofactor.

It catalyses the reaction (R)-2-hydroxyglutarate + A = 2-oxoglutarate + AH2. Its activity is regulated as follows. Activity is completely inhibited by the addition of 0.5 mM Mn(2+), Ni(2+), or Co(2+) and partially inhibited by 0.5 mM Zn(2+). Functionally, catalyzes the oxidation of D-2-hydroxyglutarate (D-2-HGA) to 2-oxoglutarate. Appears to be the only D2HGDH in E.coli, providing the way to recycle D-2-HGA produced during L-serine synthesis by SerA, by converting it back to 2-oxoglutarate. The physiological molecule that functions as the primary electron acceptor during D-2-HGA oxidation by YdiJ in E.coli is unknown. Shows strict substrate specificity towards D-2-HGA, since it has no detectable activity on L-2-hydroxyglutarate, L-malate, D-malate, L-lactate, D-lactate, L-tartrate, D-tartrate, L-glycerate, D-glycerate, glutarate, or pyruvate. The chain is D-2-hydroxyglutarate dehydrogenase (ydiJ) from Escherichia coli (strain K12).